Here is a 160-residue protein sequence, read N- to C-terminus: Endoribonuclease YbeY (160 aa).

Zn(2+) is bound by residues H123, H127, and H133.

It belongs to the endoribonuclease YbeY family. It depends on Zn(2+) as a cofactor.

The protein localises to the cytoplasm. Functionally, single strand-specific metallo-endoribonuclease involved in late-stage 70S ribosome quality control and in maturation of the 3' terminus of the 16S rRNA. This Roseiflexus sp. (strain RS-1) protein is Endoribonuclease YbeY.